The chain runs to 344 residues: Trace amine-associated receptor 8c (344 aa).

The Extracellular segment spans residues Met1–Arg31. Asn4 and Asn18 each carry an N-linked (GlcNAc...) asparagine glycan. Cystine bridges form between Cys21/Cys185 and Cys104/Cys189. Residues Val32–Val52 form a helical membrane-spanning segment. Residues Val53 to Asn67 lie on the Cytoplasmic side of the membrane. The helical transmembrane segment at Phe68 to Ser88 threads the bilayer. Topologically, residues Met89 to Asp111 are extracellular. The chain crosses the membrane as a helical span at residues Val112–Ala132. Residues Val133–Ser146 are Cytoplasmic-facing. The chain crosses the membrane as a helical span at residues Val147 to Phe167. Topologically, residues Tyr168–Gln195 are extracellular. Residues Asp196–Tyr216 form a helical membrane-spanning segment. The Cytoplasmic portion of the chain corresponds to Ser217–Thr260. A helical membrane pass occupies residues Leu261–Val281. A topological domain (extracellular) is located at residue Asp282. A helical transmembrane segment spans residues Ala283–Tyr303. Residues Asn304–Glu344 are Cytoplasmic-facing.

This sequence belongs to the G-protein coupled receptor 1 family. As to expression, specifically expressed in neurons of the olfactory epithelium.

It is found in the cell membrane. Olfactory receptor specific for trace amines, such ascyclohexylamine (1-MPD). Trace amine compounds are enriched in animal body fluids and act on trace amine-associated receptors (TAARs) to elicit both intraspecific and interspecific innate behaviors. Ligand-binding causes a conformation change that triggers signaling via G(s)-class of G alpha proteins (GNAL or GNAS). The protein is Trace amine-associated receptor 8c of Mus musculus (Mouse).